A 259-amino-acid chain; its full sequence is Ribosomal RNA small subunit methyltransferase A (259 aa).

6 residues coordinate S-adenosyl-L-methionine: N13, L15, G40, E61, D85, and N103.

It belongs to the class I-like SAM-binding methyltransferase superfamily. rRNA adenine N(6)-methyltransferase family. RsmA subfamily.

The protein resides in the cytoplasm. It catalyses the reaction adenosine(1518)/adenosine(1519) in 16S rRNA + 4 S-adenosyl-L-methionine = N(6)-dimethyladenosine(1518)/N(6)-dimethyladenosine(1519) in 16S rRNA + 4 S-adenosyl-L-homocysteine + 4 H(+). Its function is as follows. Specifically dimethylates two adjacent adenosines (A1518 and A1519) in the loop of a conserved hairpin near the 3'-end of 16S rRNA in the 30S particle. May play a critical role in biogenesis of 30S subunits. This Neisseria gonorrhoeae (strain NCCP11945) protein is Ribosomal RNA small subunit methyltransferase A.